The sequence spans 420 residues: ATP phosphoribosyltransferase regulatory subunit (420 aa).

This sequence belongs to the class-II aminoacyl-tRNA synthetase family. HisZ subfamily. As to quaternary structure, heteromultimer composed of HisG and HisZ subunits.

Its subcellular location is the cytoplasm. It functions in the pathway amino-acid biosynthesis; L-histidine biosynthesis; L-histidine from 5-phospho-alpha-D-ribose 1-diphosphate: step 1/9. In terms of biological role, required for the first step of histidine biosynthesis. May allow the feedback regulation of ATP phosphoribosyltransferase activity by histidine. The polypeptide is ATP phosphoribosyltransferase regulatory subunit (Bacillus cereus (strain ZK / E33L)).